Here is a 354-residue protein sequence, read N- to C-terminus: Probable L-ascorbate-6-phosphate lactonase UlaG (354 aa).

The protein belongs to the UlaG family. A divalent metal cation serves as cofactor.

Its subcellular location is the cytoplasm. The enzyme catalyses L-ascorbate 6-phosphate + H2O = 3-dehydro-L-gulonate 6-phosphate. It participates in cofactor degradation; L-ascorbate degradation; D-xylulose 5-phosphate from L-ascorbate: step 1/4. Probably catalyzes the hydrolysis of L-ascorbate-6-P into 3-keto-L-gulonate-6-P. Is essential for L-ascorbate utilization under anaerobic conditions. This Shigella dysenteriae serotype 1 (strain Sd197) protein is Probable L-ascorbate-6-phosphate lactonase UlaG.